Here is a 329-residue protein sequence, read N- to C-terminus: GTP 3',8-cyclase (329 aa).

The Radical SAM core domain maps to 8-234 (AFARKFYYLR…QLRQRSDGPA (227 aa)). GTP is bound at residue arginine 17. The [4Fe-4S] cluster site is built by cysteine 24 and cysteine 28. Tyrosine 30 serves as a coordination point for S-adenosyl-L-methionine. Residue cysteine 31 coordinates [4Fe-4S] cluster. Arginine 68 serves as a coordination point for GTP. Position 72 (glycine 72) interacts with S-adenosyl-L-methionine. Threonine 99 provides a ligand contact to GTP. Serine 123 is a binding site for S-adenosyl-L-methionine. A GTP-binding site is contributed by lysine 160. Methionine 194 lines the S-adenosyl-L-methionine pocket. [4Fe-4S] cluster-binding residues include cysteine 257 and cysteine 260. 262 to 264 (RLR) lines the GTP pocket. A [4Fe-4S] cluster-binding site is contributed by cysteine 274.

It belongs to the radical SAM superfamily. MoaA family. As to quaternary structure, monomer and homodimer. [4Fe-4S] cluster serves as cofactor.

It catalyses the reaction GTP + AH2 + S-adenosyl-L-methionine = (8S)-3',8-cyclo-7,8-dihydroguanosine 5'-triphosphate + 5'-deoxyadenosine + L-methionine + A + H(+). The protein operates within cofactor biosynthesis; molybdopterin biosynthesis. In terms of biological role, catalyzes the cyclization of GTP to (8S)-3',8-cyclo-7,8-dihydroguanosine 5'-triphosphate. In Escherichia coli O127:H6 (strain E2348/69 / EPEC), this protein is GTP 3',8-cyclase.